We begin with the raw amino-acid sequence, 525 residues long: Adenosine deaminase AGSA (525 aa).

A signal peptide spans 1-25 (MSSFSTHNFVAIATFVCWFCCLATA). Residue Asn-81 is glycosylated (N-linked (GlcNAc...) asparagine). Positions 117 and 119 each coordinate Zn(2+). Residue Asp-120 coordinates substrate. N-linked (GlcNAc...) asparagine glycosylation occurs at Asn-132. An intrachain disulfide couples Cys-142 to Cys-163. Asn-188 carries N-linked (GlcNAc...) asparagine glycosylation. Substrate is bound by residues 207 to 214 (WVRFNKYF) and Gly-329. A glycan (N-linked (GlcNAc...) asparagine) is linked at Asn-334. His-361 provides a ligand contact to Zn(2+). The active-site Proton donor is the Glu-364. The active-site Proton acceptor is His-389. Zn(2+) is bound at residue Asp-446. Asp-447 lines the substrate pocket.

The protein belongs to the metallo-dependent hydrolases superfamily. Adenosine and AMP deaminases family. ADGF subfamily. It depends on Zn(2+) as a cofactor. As to expression, detected in egg cordons and in the developing central nervous system. Not detected in adult central nervous system (at protein level). Atrial gland.

The protein localises to the secreted. The catalysed reaction is adenosine + H2O + H(+) = inosine + NH4(+). Functionally, adenosine deaminase that may contribute to the degradation of extracellular adenosine, a signaling molecule that controls a variety of cellular responses. May play a role in the regulation of cell proliferation. The sequence is that of Adenosine deaminase AGSA from Aplysia californica (California sea hare).